The chain runs to 874 residues: Alanine--tRNA ligase (874 aa).

Residues His562, His566, Cys664, and His668 each coordinate Zn(2+).

The protein belongs to the class-II aminoacyl-tRNA synthetase family. Zn(2+) serves as cofactor.

It localises to the cytoplasm. The catalysed reaction is tRNA(Ala) + L-alanine + ATP = L-alanyl-tRNA(Ala) + AMP + diphosphate. Functionally, catalyzes the attachment of alanine to tRNA(Ala) in a two-step reaction: alanine is first activated by ATP to form Ala-AMP and then transferred to the acceptor end of tRNA(Ala). Also edits incorrectly charged Ser-tRNA(Ala) and Gly-tRNA(Ala) via its editing domain. This Shewanella putrefaciens (strain CN-32 / ATCC BAA-453) protein is Alanine--tRNA ligase.